The following is a 226-amino-acid chain: UPF0111 protein PH0637 (226 aa).

This sequence belongs to the UPF0111 family.

In Pyrococcus horikoshii (strain ATCC 700860 / DSM 12428 / JCM 9974 / NBRC 100139 / OT-3), this protein is UPF0111 protein PH0637.